Reading from the N-terminus, the 358-residue chain is UDP-N-acetylglucosamine--N-acetylmuramyl-(pentapeptide) pyrophosphoryl-undecaprenol N-acetylglucosamine transferase (358 aa).

Residues 11-13 (TGG), arginine 163, serine 191, isoleucine 245, and glutamine 290 contribute to the UDP-N-acetyl-alpha-D-glucosamine site.

The protein belongs to the glycosyltransferase 28 family. MurG subfamily.

Its subcellular location is the cell inner membrane. It carries out the reaction di-trans,octa-cis-undecaprenyl diphospho-N-acetyl-alpha-D-muramoyl-L-alanyl-D-glutamyl-meso-2,6-diaminopimeloyl-D-alanyl-D-alanine + UDP-N-acetyl-alpha-D-glucosamine = di-trans,octa-cis-undecaprenyl diphospho-[N-acetyl-alpha-D-glucosaminyl-(1-&gt;4)]-N-acetyl-alpha-D-muramoyl-L-alanyl-D-glutamyl-meso-2,6-diaminopimeloyl-D-alanyl-D-alanine + UDP + H(+). The protein operates within cell wall biogenesis; peptidoglycan biosynthesis. In terms of biological role, cell wall formation. Catalyzes the transfer of a GlcNAc subunit on undecaprenyl-pyrophosphoryl-MurNAc-pentapeptide (lipid intermediate I) to form undecaprenyl-pyrophosphoryl-MurNAc-(pentapeptide)GlcNAc (lipid intermediate II). The polypeptide is UDP-N-acetylglucosamine--N-acetylmuramyl-(pentapeptide) pyrophosphoryl-undecaprenol N-acetylglucosamine transferase (Herminiimonas arsenicoxydans).